A 445-amino-acid polypeptide reads, in one-letter code: Argininosuccinate synthase (445 aa).

ATP-binding positions include 17–25 and Ala43; that span reads AFSGGLDTS. Tyr99 serves as a coordination point for L-citrulline. ATP contacts are provided by Gly129 and Thr131. Thr131, Asn135, and Asp136 together coordinate L-aspartate. An L-citrulline-binding site is contributed by Asn135. Residue Asp136 participates in ATP binding. L-citrulline is bound by residues Arg139 and Ser192. Asp194 contacts ATP. Residues Thr201, Glu203, and Glu280 each coordinate L-citrulline.

The protein belongs to the argininosuccinate synthase family. Type 2 subfamily. In terms of assembly, homotetramer.

The protein resides in the cytoplasm. The enzyme catalyses L-citrulline + L-aspartate + ATP = 2-(N(omega)-L-arginino)succinate + AMP + diphosphate + H(+). The protein operates within amino-acid biosynthesis; L-arginine biosynthesis; L-arginine from L-ornithine and carbamoyl phosphate: step 2/3. This chain is Argininosuccinate synthase, found in Bordetella petrii (strain ATCC BAA-461 / DSM 12804 / CCUG 43448).